The following is a 149-amino-acid chain: Large ribosomal subunit protein bL9 (149 aa).

This sequence belongs to the bacterial ribosomal protein bL9 family.

Binds to the 23S rRNA. This chain is Large ribosomal subunit protein bL9, found in Rubrobacter xylanophilus (strain DSM 9941 / JCM 11954 / NBRC 16129 / PRD-1).